Reading from the N-terminus, the 461-residue chain is General transcription factor IIH subunit 2 (461 aa).

A compositionally biased stretch (polar residues) spans 1–13 (MSKNIYNNNAQNK). Disordered stretches follow at residues 1-37 (MSKN…DEDG) and 61-83 (LRPS…DRDG). Residues 61-71 (LRPSNQEERNT) show a composition bias toward basic and acidic residues. One can recognise a VWFA domain in the interval 98 to 275 (HLCLILDLSK…ESLMLKCQPP (178 aa)). The C4-type zinc-finger motif lies at 315-332 (CPRCGVKSCELPTDCQIC). Positions 423 to 447 (TNGKTNGNEITNGNGNGNGNENENG) are enriched in low complexity. Residues 423-461 (TNGKTNGNEITNGNGNGNGNENENGNGNGNGNGNGNGLH) are disordered. The interval 434–459 (NGNGNGNGNENENGNGNGNGNGNGNG) is 13 X 2 tandem repeat of N-[GE]. Over residues 448 to 461 (NGNGNGNGNGNGLH) the composition is skewed to gly residues.

Belongs to the GTF2H2 family. In terms of assembly, component of the 7-subunit TFIIH core complex composed of XPB/repB, XPD/repD, gtf2h1, gtf2h2, gtf2h3, gtf2h4 and gtf2h5, which is active in NER. The core complex associates with the 3-subunit CDK-activating kinase (CAK) module composed of cycH/cyclin H, cdk7 and mnat1 to form the 10-subunit holoenzyme (holo-TFIIH) active in transcription.

It is found in the nucleus. Functionally, component of the general transcription and DNA repair factor IIH (TFIIH) core complex, which is involved in general and transcription-coupled nucleotide excision repair (NER) of damaged DNA and, when complexed to CAK, in RNA transcription by RNA polymerase II. In NER, TFIIH acts by opening DNA around the lesion to allow the excision of the damaged oligonucleotide and its replacement by a new DNA fragment. In transcription, TFIIH has an essential role in transcription initiation. When the pre-initiation complex (PIC) has been established, TFIIH is required for promoter opening and promoter escape. Phosphorylation of the C-terminal tail (CTD) of the largest subunit of RNA polymerase II by the kinase module CAK controls the initiation of transcription. This Dictyostelium discoideum (Social amoeba) protein is General transcription factor IIH subunit 2 (gtf2h2).